Consider the following 419-residue polypeptide: MEKMNITNQEHDAFVKAHPNGDLLQLTKWAETKRLTGWYSKRVAVGEDGEIKGVGQLLFKKIPKLPFTLCYVSRGFVTDYSDKAALEQLLEETKKVAKAEKAYAIKIDPDVEVDKGIDALKNLNALGFKHKGFKEGLSKDYIQPRMTMITPIDKSDEEIFQSFERRNRSKVRLSLKRGTKVERSNREGLKNFAELMKITGERDGFLTRDLSYFQNIYDSLHEDGDAELFLVKLEPKPVLDDIDNELKELESEKTQLQNKYERKQVKKTKNKLNDVEAKIQKSIERKDDMTDLLAKHPNGIYLSGALLMFAGSKSYYLYGASSNDYRDFLPNHHMQYEMMKFAREHGAKTYDFGGTDNNPDKDSEHYGLWAFKRVWGTYLSEKIGEFDYVLNQPLYQLIEQVKPRLTKAKIKISRKLKGK.

The protein belongs to the FemABX family.

Its subcellular location is the cytoplasm. It catalyses the reaction beta-D-GlcNAc-(1-&gt;4)-Mur2Ac(oyl-L-Ala-D-isoglutaminyl-L-Lys-D-Ala-D-Ala)-di-trans,octa-cis-undecaprenyl diphosphate + glycyl-tRNA(Gly) = beta-D-GlcNAc-(1-&gt;4)-Mur2Ac(oyl-L-Ala-D-isoglutaminyl-L-Lys-(N(6)-Gly)-D-Ala-D-Ala)-di-trans,octa-cis-undecaprenyl diphosphate + tRNA(Gly) + H(+). Functionally, catalyzes the incorporation of amino acid(s) into the interchain peptide bridge of peptidoglycan, using aminoacyl-tRNA as amino acid donor. In Staphylococcus haemolyticus (strain JCSC1435), this protein is Lipid II:glycine glycyltransferase (femX).